An 860-amino-acid polypeptide reads, in one-letter code: DNA mismatch repair protein MutS (860 aa).

625–632 is an ATP binding site; the sequence is GPNMGGKS.

Belongs to the DNA mismatch repair MutS family.

Functionally, this protein is involved in the repair of mismatches in DNA. It is possible that it carries out the mismatch recognition step. This protein has a weak ATPase activity. This is DNA mismatch repair protein MutS from Aeromonas hydrophila subsp. hydrophila (strain ATCC 7966 / DSM 30187 / BCRC 13018 / CCUG 14551 / JCM 1027 / KCTC 2358 / NCIMB 9240 / NCTC 8049).